We begin with the raw amino-acid sequence, 1450 residues long: Arf-GAP with Rho-GAP domain, ANK repeat and PH domain-containing protein 1 (1450 aa).

Positions 6–70 constitute an SAM domain; sequence DAALSVAEWL…LAGLLRAHTS (65 aa). Residues 81–90 are required for interaction with SH3KBP1; sequence PVPMKRHIFR. Disordered regions lie at residues 89–144 and 173–302; these read FRSP…LPPL and TKEE…SSLS. The span at 92–102 shows a compositional bias: pro residues; sequence PPVPATPPEPL. Low complexity predominate over residues 190–199; sequence QSEEPLSTLP. Residues 200–219 show a composition bias toward pro residues; that stretch reads QGPPQPPSPPPCPPEIPPKP. 2 stretches are compositionally biased toward acidic residues: residues 225–236 and 269–286; these read EFDDSDYDEVPE and EGEE…EDDH. A Phosphoserine modification is found at S229. At Y231 the chain carries Phosphotyrosine; by PTK6. Residues 327-419 form the PH 1 domain; sequence PVIKAGWLDK…WMQALQQAMA (93 aa). T354 is subject to Phosphothreonine. S428 carries the post-translational modification Phosphoserine. A phosphotyrosine mark is found at Y431 and Y504. The PH 2 domain occupies 440-529; the sequence is QPDRAGSLEL…WLEAMQGAIA (90 aa). The Arf-GAP domain maps to 535–660; that stretch reads SEVAERIWAA…RYHPLFGNQE (126 aa). The segment at 550-576 adopts a C4-type zinc-finger fold; that stretch reads CADCGAPQPDWASINLCVVICKRCAGE. S738 is modified (phosphoserine). The 108-residue stretch at 743–850 folds into the PH 3 domain; that stretch reads TVSHSGFLYK…WVKCIAKAFV (108 aa). One can recognise a Rho-GAP domain in the interval 954 to 1139; sequence ASMGDTLSEQ…DLINHYVVVF (186 aa). The Ras-associating domain occupies 1172–1261; it reads GDFICTVYLE…SHLVVKKHQA (90 aa). The 123-residue stretch at 1274–1396 folds into the PH 4 domain; it reads GDTKHGMMKF…WFATFLFVQH (123 aa). Phosphoserine is present on residues S1428 and S1435.

As to quaternary structure, interacts with SH3KBP1/CIN85 (via SH3 domains). The interaction is independent of EGF and does not affect ARAP1 GTPase-activating activity but is involved in regulating ubiquitination and endocytic trafficking of EGFR. ARAP1 competes with E3 ubiquitin-protein ligase CBL for binding to SH3KBP1, preventing interaction of CBL with SH3KBP1; this is likely to regulate SH3KBP1-mediated internalization of EGFR. Interacts with TNFRSF10A. Phosphorylated by PTK6 following EGF stimulation which enhances EGFR signaling by delaying EGFR down-regulation; the interaction is mediated by the SH2 domain of PTK6. Phosphorylation promotes association with the Golgi apparatus and endosomes. Detected in heart, skeletal muscle, spleen, kidney, liver, placenta, lung, peripheral blood leukocytes, adrenal gland, bone marrow, brain, lymph node, mammary gland, prostate, spinal cord, stomach, thyroid and trachea.

It localises to the cytoplasm. The protein localises to the golgi apparatus. The protein resides in the trans-Golgi network. It is found in the golgi stack. Its subcellular location is the cell membrane. It localises to the endosome. The protein localises to the multivesicular body. The protein resides in the cell projection. It is found in the ruffle. Its subcellular location is the podosome. It localises to the early endosome. Phosphatidylinositol 3,4,5-trisphosphate-dependent GTPase-activating protein that modulates actin cytoskeleton remodeling by regulating ARF and RHO family members. Activated by phosphatidylinositol 3,4,5-trisphosphate (PtdIns(3,4,5)P3) binding and, to a lesser extent, by phosphatidylinositol 3,4-bisphosphate (PtdIns(3,4)P2) binding. Has a preference for ARF1 and ARF5. Positively regulates the ring size of circular dorsal ruffles and promotes macropinocytosis. Acts as a bridging factor in osteoclasts to control actin and membrane dynamics. Regulates the condensing of osteoclast podosomes into sealing zones which segregate the bone-facing membrane from other membrane domains and are required for osteoclast resorption activity. Also regulates recruitment of the AP-3 complex to endosomal membranes and trafficking of lysosomal membrane proteins to the ruffled membrane border of osteoclasts to modulate bone resorption. Regulates the endocytic trafficking of EGFR. Regulates the incorporation of CD63 and CD9 into multivesicular bodies. Required in the retinal pigment epithelium (RPE) for photoreceptor survival due to its role in promoting RPE phagocytosis. This is Arf-GAP with Rho-GAP domain, ANK repeat and PH domain-containing protein 1 (ARAP1) from Homo sapiens (Human).